The primary structure comprises 208 residues: MVSRRVQALLDQLRAQGIQDELVLNALAAVPREKFVDEAFEQKAWDNIALPIGQGQTISQPYMVARMTELLELTPQSRVLEIGTGSGYQTAILAHLVQHVCSVERIKGLQWQARRRLKNLDLHNVSTRHGDGWQGWQARAPFDAIIVTAAPPEIPTALMTQLDEGGILVLPVGEEHQYLKRVRRRGGEFIIDTVEAVRFVPLVKGELA.

Ser-59 is an active-site residue.

The protein belongs to the methyltransferase superfamily. L-isoaspartyl/D-aspartyl protein methyltransferase family.

It is found in the cytoplasm. The enzyme catalyses [protein]-L-isoaspartate + S-adenosyl-L-methionine = [protein]-L-isoaspartate alpha-methyl ester + S-adenosyl-L-homocysteine. Catalyzes the methyl esterification of L-isoaspartyl residues in peptides and proteins that result from spontaneous decomposition of normal L-aspartyl and L-asparaginyl residues. It plays a role in the repair and/or degradation of damaged proteins. This is Protein-L-isoaspartate O-methyltransferase from Escherichia coli O1:K1 / APEC.